The chain runs to 180 residues: tRNA (cytidine(56)-2'-O)-methyltransferase (180 aa).

S-adenosyl-L-methionine is bound by residues L83, 115–119 (GAEKV), and 133–140 (VGNQPHSE).

It belongs to the aTrm56 family. In terms of assembly, homodimer.

It is found in the cytoplasm. It catalyses the reaction cytidine(56) in tRNA + S-adenosyl-L-methionine = 2'-O-methylcytidine(56) in tRNA + S-adenosyl-L-homocysteine + H(+). Functionally, specifically catalyzes the AdoMet-dependent 2'-O-ribose methylation of cytidine at position 56 in tRNAs. The chain is tRNA (cytidine(56)-2'-O)-methyltransferase from Methanococcus aeolicus (strain ATCC BAA-1280 / DSM 17508 / OCM 812 / Nankai-3).